The primary structure comprises 303 residues: Mevalonate kinase (303 aa).

90–100 (PAGSGLGSSAA) lines the ATP pocket. Residue aspartate 141 is the Proton acceptor of the active site.

This sequence belongs to the GHMP kinase family. Mevalonate kinase subfamily. As to quaternary structure, homodimer. Mg(2+) is required as a cofactor.

It is found in the cytoplasm. The catalysed reaction is (R)-mevalonate + ATP = (R)-5-phosphomevalonate + ADP + H(+). The protein operates within isoprenoid biosynthesis; isopentenyl diphosphate biosynthesis via mevalonate pathway; isopentenyl diphosphate from (R)-mevalonate: step 1/3. Functionally, catalyzes the phosphorylation of (R)-mevalonate (MVA) to (R)-mevalonate 5-phosphate (MVAP). Functions in the mevalonate (MVA) pathway leading to isopentenyl diphosphate (IPP), a key precursor for the biosynthesis of isoprenoid compounds such as archaeal membrane lipids. This chain is Mevalonate kinase, found in Methanothermobacter thermautotrophicus (strain ATCC 29096 / DSM 1053 / JCM 10044 / NBRC 100330 / Delta H) (Methanobacterium thermoautotrophicum).